The primary structure comprises 196 residues: ATP-dependent Clp protease proteolytic subunit (196 aa).

The active-site Nucleophile is the Ser-96. His-121 is an active-site residue.

The protein belongs to the peptidase S14 family. As to quaternary structure, fourteen ClpP subunits assemble into 2 heptameric rings which stack back to back to give a disk-like structure with a central cavity, resembling the structure of eukaryotic proteasomes.

It localises to the cytoplasm. It catalyses the reaction Hydrolysis of proteins to small peptides in the presence of ATP and magnesium. alpha-casein is the usual test substrate. In the absence of ATP, only oligopeptides shorter than five residues are hydrolyzed (such as succinyl-Leu-Tyr-|-NHMec, and Leu-Tyr-Leu-|-Tyr-Trp, in which cleavage of the -Tyr-|-Leu- and -Tyr-|-Trp bonds also occurs).. In terms of biological role, cleaves peptides in various proteins in a process that requires ATP hydrolysis. Has a chymotrypsin-like activity. Plays a major role in the degradation of misfolded proteins. This is ATP-dependent Clp protease proteolytic subunit from Streptococcus uberis (strain ATCC BAA-854 / 0140J).